Reading from the N-terminus, the 165-residue chain is Destrin (165 aa).

Ala-2 carries the N-acetylalanine modification. Ser-3 is subject to Phosphoserine. Residues 4-153 enclose the ADF-H domain; that stretch reads GVQVADEVCR…NRTSIAEKLG (150 aa). The residue at position 19 (Lys-19) is an N6-acetyllysine. The Nuclear localization signal signature appears at 30–34; that stretch reads KKRKK.

This sequence belongs to the actin-binding proteins ADF family. Post-translationally, ISGylated.

In terms of biological role, actin-depolymerizing protein. Severs actin filaments (F-actin) and binds to actin monomers (G-actin). Acts in a pH-independent manner. The chain is Destrin (Dstn) from Rattus norvegicus (Rat).